The sequence spans 616 residues: uncharacterized protein (616 aa).

This sequence belongs to the UbiD family.

This is an uncharacterized protein from Helicobacter pylori (strain ATCC 700392 / 26695) (Campylobacter pylori).